The sequence spans 469 residues: Cysteine--tRNA ligase (469 aa).

Zn(2+) is bound at residue cysteine 33. The 'HIGH' region motif lies at 35–45 (PTVYNLLHIGN). Positions 214, 239, and 243 each coordinate Zn(2+). Residues 271–275 (KMSKS) carry the 'KMSKS' region motif. Lysine 274 lines the ATP pocket.

It belongs to the class-I aminoacyl-tRNA synthetase family. In terms of assembly, monomer. Requires Zn(2+) as cofactor.

Its subcellular location is the cytoplasm. It catalyses the reaction tRNA(Cys) + L-cysteine + ATP = L-cysteinyl-tRNA(Cys) + AMP + diphosphate. The chain is Cysteine--tRNA ligase from Petrotoga mobilis (strain DSM 10674 / SJ95).